The chain runs to 548 residues: Membrane protein insertase YidC (548 aa).

Residues 6 to 26 (NLLVIALLFVSFMIWQAWEQD) traverse the membrane as a helical segment. Residues 28-56 (NPQPQTQQTTQTTTTAAGSAADQGVPASG) form a disordered region. Residues 29–42 (PQPQTQQTTQTTTT) are compositionally biased toward low complexity. Transmembrane regions (helical) follow at residues 350-370 (FVGN…GIMY), 424-444 (FPLI…MGSI), 458-478 (LSAQ…MFFI), and 499-519 (PVIF…YYIV).

The protein belongs to the OXA1/ALB3/YidC family. Type 1 subfamily. In terms of assembly, interacts with the Sec translocase complex via SecD. Specifically interacts with transmembrane segments of nascent integral membrane proteins during membrane integration.

The protein localises to the cell inner membrane. Functionally, required for the insertion and/or proper folding and/or complex formation of integral membrane proteins into the membrane. Involved in integration of membrane proteins that insert both dependently and independently of the Sec translocase complex, as well as at least some lipoproteins. Aids folding of multispanning membrane proteins. The sequence is that of Membrane protein insertase YidC from Salmonella dublin (strain CT_02021853).